Consider the following 937-residue polypeptide: Aconitate hydratase A (937 aa).

[4Fe-4S] cluster contacts are provided by cysteine 439, cysteine 505, and cysteine 508. Positions lysine 898–threonine 921 are disordered.

This sequence belongs to the aconitase/IPM isomerase family. In terms of assembly, monomer. It depends on [4Fe-4S] cluster as a cofactor.

The enzyme catalyses citrate = D-threo-isocitrate. It carries out the reaction (2S,3R)-3-hydroxybutane-1,2,3-tricarboxylate = 2-methyl-cis-aconitate + H2O. The protein operates within carbohydrate metabolism; tricarboxylic acid cycle; isocitrate from oxaloacetate: step 2/2. It participates in organic acid metabolism; propanoate degradation. Involved in the catabolism of short chain fatty acids (SCFA) via the tricarboxylic acid (TCA)(acetyl degradation route) and probably the 2-methylcitrate cycle I (propionate degradation route). Catalyzes the reversible isomerization of citrate to isocitrate via cis-aconitate. Could catalyze the hydration of 2-methyl-cis-aconitate to yield (2R,3S)-2-methylisocitrate. The apo form of AcnA functions as a RNA-binding regulatory protein. The chain is Aconitate hydratase A (acn) from Francisella tularensis subsp. holarctica (strain LVS).